The chain runs to 332 residues: tRNA N6-adenosine threonylcarbamoyltransferase (332 aa).

Residues His-107 and His-111 each contribute to the Fe cation site. Substrate-binding positions include 129–133 (LVSGG), Asp-162, Gly-175, and Asn-267. Asp-295 lines the Fe cation pocket.

This sequence belongs to the KAE1 / TsaD family. It depends on Fe(2+) as a cofactor.

The protein localises to the cytoplasm. It carries out the reaction L-threonylcarbamoyladenylate + adenosine(37) in tRNA = N(6)-L-threonylcarbamoyladenosine(37) in tRNA + AMP + H(+). Required for the formation of a threonylcarbamoyl group on adenosine at position 37 (t(6)A37) in tRNAs that read codons beginning with adenine. Is involved in the transfer of the threonylcarbamoyl moiety of threonylcarbamoyl-AMP (TC-AMP) to the N6 group of A37, together with TsaE and TsaB. TsaD likely plays a direct catalytic role in this reaction. This is tRNA N6-adenosine threonylcarbamoyltransferase from Campylobacter hominis (strain ATCC BAA-381 / DSM 21671 / CCUG 45161 / LMG 19568 / NCTC 13146 / CH001A).